The following is a 1310-amino-acid chain: Rho family-interacting cell polarization regulator 2 (1310 aa).

2 positions are modified to phosphoserine: Ser123 and Ser178. The segment at Met196–Gly254 is involved in cell filopodia formation. A coiled-coil region spans residues Asn224–Leu253. At Ser508 the chain carries Phosphoserine. Residues Ser588 to Ser608 are compositionally biased toward polar residues. Residues Ser588–Ser639 are disordered. A compositionally biased stretch (basic and acidic residues) spans Leu609 to Val631. Ser682 is subject to Phosphoserine.

This sequence belongs to the RIPOR family. As to quaternary structure, homooligomer; homooligomerization is regulated by RHOC and leads to the formation of concatemers through the association of N- and C-termini. Interacts (phosphorylated form) with 14-3-3 proteins; these interactions occur during myogenic cell differentiation and also induces T cell proliferation arrest. Interacts (phosphorylated form) with HDAC6; this interaction occurs during early myogenic differentiation, prevents HDAC6 to deacetylate tubulin and also induces T cell proliferation arrest. Interacts with DYSF; this interaction occurs during early myogenic differentiation. Interacts with MYOF. Interacts (via active GTP- or inactive GDP-bound forms) with RHOA; this interaction is direct, blocks the loading of GTP to RHOA and decreases upon chemokine CCL19 stimulation in primary T lymphocytes. Interacts with RHOC. Interacts (via phosphorylated form) with YWHAB; this interaction occurs in a chemokine-dependent manner and does not compete for binding of RIPOR2 with RHOA nor blocks inhibition of RIPOR2-mediated RHOA activity. Interacts with YWHAE. Interacts with YWHAQ. In terms of processing, phosphorylated. Chemokine-induced phosphorylation in neutrophils occurs in a PKC- and AKT-dependent manner, resulting in RIPOR2 interaction with YWHAB and stabilization. Phosphorylated by PKCA, AKT1 and MAPKAPK1A; in vitro. Expressed in the cochlea (at protein level).

The protein localises to the cytoplasm. It localises to the cytoskeleton. It is found in the cell projection. The protein resides in the filopodium. Its subcellular location is the apical cell membrane. The protein localises to the stereocilium. It localises to the stereocilium membrane. In terms of biological role, acts as an inhibitor of the small GTPase RHOA and plays several roles in the regulation of myoblast and hair cell differentiation, lymphocyte T proliferation and neutrophil polarization. Plays a role in fetal mononuclear myoblast differentiation by promoting filopodia and myotube formation. Maintains naive T lymphocytes in a quiescent state and prevents chemokine-induced T lymphocyte responses, such as cell adhesion, polarization and migration. Involved also in the regulation of neutrophil polarization, chemotaxis and adhesion. Required for normal development of inner and outer hair cell stereocilia within the cochlea of the inner ear. Plays a role for maintaining the structural organization of the basal domain of stereocilia. Involved in mechanosensory hair cell function. Required for normal hearing. This is Rho family-interacting cell polarization regulator 2 from Rattus norvegicus (Rat).